Consider the following 625-residue polypeptide: Chaperone protein HtpG (625 aa).

The segment at 1–337 (MSTNQETRGF…TNDLPLNVSR (337 aa)) is a; substrate-binding. A b region spans residues 338–554 (EILQENKITA…NDEMTTQMAK (217 aa)). Residues 555–625 (LFAAMGQKAP…FIKRMNKLLG (71 aa)) are c.

This sequence belongs to the heat shock protein 90 family. Homodimer.

It localises to the cytoplasm. In terms of biological role, molecular chaperone. Has ATPase activity. This chain is Chaperone protein HtpG, found in Actinobacillus pleuropneumoniae serotype 5b (strain L20).